Reading from the N-terminus, the 409-residue chain is DNA polymerase IV 2 (409 aa).

Residues 5–190 (IFMVDMESFF…LPIECLYGVG (186 aa)) form the UmuC domain. Mg(2+) contacts are provided by aspartate 9 and aspartate 105. Glutamate 106 is an active-site residue.

Belongs to the DNA polymerase type-Y family. Monomer. It depends on Mg(2+) as a cofactor.

The protein localises to the cytoplasm. It catalyses the reaction DNA(n) + a 2'-deoxyribonucleoside 5'-triphosphate = DNA(n+1) + diphosphate. Functionally, poorly processive, error-prone DNA polymerase involved in untargeted mutagenesis. Copies undamaged DNA at stalled replication forks, which arise in vivo from mismatched or misaligned primer ends. These misaligned primers can be extended by PolIV. Exhibits no 3'-5' exonuclease (proofreading) activity. May be involved in translesional synthesis, in conjunction with the beta clamp from PolIII. The protein is DNA polymerase IV 2 (dinB2) of Halalkalibacterium halodurans (strain ATCC BAA-125 / DSM 18197 / FERM 7344 / JCM 9153 / C-125) (Bacillus halodurans).